Consider the following 393-residue polypeptide: Major outer membrane protein P.IA (393 aa).

Positions 1-19 (MRKKLTALVLSALPLAAVA) are cleaved as a signal peptide.

The protein belongs to the Gram-negative porin family. Homotrimer.

It is found in the cell outer membrane. In terms of biological role, serves as a slightly cation selective porin. Major antigen on the gonococcal cell surface and it may have pathogenic properties in addition to its porin activity. The sequence is that of Major outer membrane protein P.IA (porA) from Neisseria meningitidis serogroup C.